The primary structure comprises 100 residues: Large ribosomal subunit protein uL23 (100 aa).

This sequence belongs to the universal ribosomal protein uL23 family. As to quaternary structure, part of the 50S ribosomal subunit. Contacts protein L29, and trigger factor when it is bound to the ribosome.

Its function is as follows. One of the early assembly proteins it binds 23S rRNA. One of the proteins that surrounds the polypeptide exit tunnel on the outside of the ribosome. Forms the main docking site for trigger factor binding to the ribosome. This Shewanella halifaxensis (strain HAW-EB4) protein is Large ribosomal subunit protein uL23.